The sequence spans 366 residues: tRNA/tmRNA (uracil-C(5))-methyltransferase (366 aa).

Residues Gln-190, Tyr-218, Asn-223, Glu-239, and Asp-299 each contribute to the S-adenosyl-L-methionine site. The active-site Nucleophile is Cys-324. Glu-358 (proton acceptor) is an active-site residue.

Belongs to the class I-like SAM-binding methyltransferase superfamily. RNA M5U methyltransferase family. TrmA subfamily.

The enzyme catalyses uridine(54) in tRNA + S-adenosyl-L-methionine = 5-methyluridine(54) in tRNA + S-adenosyl-L-homocysteine + H(+). It catalyses the reaction uridine(341) in tmRNA + S-adenosyl-L-methionine = 5-methyluridine(341) in tmRNA + S-adenosyl-L-homocysteine + H(+). Its function is as follows. Dual-specificity methyltransferase that catalyzes the formation of 5-methyluridine at position 54 (m5U54) in all tRNAs, and that of position 341 (m5U341) in tmRNA (transfer-mRNA). This is tRNA/tmRNA (uracil-C(5))-methyltransferase from Citrobacter koseri (strain ATCC BAA-895 / CDC 4225-83 / SGSC4696).